Reading from the N-terminus, the 311-residue chain is MAVDIQPACLGLYCGKTLLFKNGSTEIYGECGVCPRGQRTNAQKYCQPCTESPELYDWLYLGFMAMLPLVLHWFFIEWYSGKKSSSALFQHITALFECSMAAIITLLVSDPVGVLYIRSCRVLMLSDWYTMLYNPSPDYVTTVHCTHEAVYPLYTIVFIYYAFCLVLMMLLRPLLVKKIACGLGKSDRFKSIYAALYFFPILTVLQAVGGGLLYYAFPYIILVLSLVTLAVYMSASEIENCYDLLVRKKRLIVLFSHWLLHAYGIISISRVDKLEQDLPLLALVPTPALFYLFTAKFTEPSRILSEGANGH.

The Lumenal portion of the chain corresponds to 1 to 57 (MAVDIQPACLGLYCGKTLLFKNGSTEIYGECGVCPRGQRTNAQKYCQPCTESPELYD). N-linked (GlcNAc...) asparagine glycosylation occurs at asparagine 22. Residues 58 to 78 (WLYLGFMAMLPLVLHWFFIEW) traverse the membrane as a helical segment. Residues 79 to 87 (YSGKKSSSA) are Cytoplasmic-facing. A helical transmembrane segment spans residues 88–108 (LFQHITALFECSMAAIITLLV). The Lumenal portion of the chain corresponds to 109-149 (SDPVGVLYIRSCRVLMLSDWYTMLYNPSPDYVTTVHCTHEA). The helical transmembrane segment at 150 to 170 (VYPLYTIVFIYYAFCLVLMML) threads the bilayer. Residues 171–188 (LRPLLVKKIACGLGKSDR) lie on the Cytoplasmic side of the membrane. Residues 189–209 (FKSIYAALYFFPILTVLQAVG) form a helical membrane-spanning segment. A topological domain (lumenal) is located at residue glycine 210. A helical transmembrane segment spans residues 211-231 (GLLYYAFPYIILVLSLVTLAV). The Cytoplasmic portion of the chain corresponds to 232-250 (YMSASEIENCYDLLVRKKR). Residues 251-271 (LIVLFSHWLLHAYGIISISRV) traverse the membrane as a helical segment. Over 272–277 (DKLEQD) the chain is Lumenal. The helical transmembrane segment at 278-298 (LPLLALVPTPALFYLFTAKFT) threads the bilayer. Residues 299–311 (EPSRILSEGANGH) lie on the Cytoplasmic side of the membrane.

In terms of assembly, interacts with RNF5 and MAPK8, but not with MAPK9. Binding to MAPK8 occurs before and after exposure to stress, such as UV irradiation. After exposure to stress, interacts with phosphorylated MAPK8. Competes with DUSP10 for MAPK8 binding. Associates with multiple components of the proteasome and with ERAD regulatory proteins including AMFR/GP78, CANX, PSMC1, PSMC2, PSMC3/TBP1, PSMC5, PSMC6, PSMD8, SEC61-ALPHA and UFD1. Interacts with DERL1 (in the presence of misfolded protein CFTR(F508del)). In terms of processing, ubiquitinated by RNF5 via 'Lys-63'-linked ubiquitin linkage in a UBE2N-dependent manner. Ubiquitination decreases association with components of the proteasome and ERAD.

It localises to the endoplasmic reticulum membrane. In terms of biological role, regulates the duration of MAPK8 activity in response to various stress stimuli. Facilitates degradation of misfolded endoplasmic reticulum (ER) proteins through the recruitment of components of the proteasome and endoplasmic reticulum-associated degradation (ERAD) system. The sequence is that of JNK1/MAPK8-associated membrane protein (JKAMP) from Homo sapiens (Human).